A 621-amino-acid chain; its full sequence is ATP-dependent DNA helicase Q1 (621 aa).

The Helicase ATP-binding domain maps to 100 to 275; it reads VNATMARKDI…QKILCVEKCL (176 aa). 113-120 is a binding site for ATP; that stretch reads MPTGGGKS. The DEVH box motif lies at 219-222; sequence DEVH. A Helicase C-terminal domain is found at 296–451; it reads SAEDFIENIA…EMVSYCQNIS (156 aa). Zn(2+) contacts are provided by C453, C471, C475, and C478. 2 positions are modified to N6-acetyllysine: K514 and K522. S597 and S602 each carry phosphoserine.

It belongs to the helicase family. RecQ subfamily. May form homodimers or higher order oligomers. Interacts with EXO1. Interacts with MLH1. Interacts with PARP1. The cofactor is Mg(2+). Mn(2+) is required as a cofactor. It depends on Zn(2+) as a cofactor.

It localises to the nucleus. The enzyme catalyses Couples ATP hydrolysis with the unwinding of duplex DNA by translocating in the 3'-5' direction.. The catalysed reaction is ATP + H2O = ADP + phosphate + H(+). It catalyses the reaction dATP + H2O = dADP + phosphate + H(+). In terms of biological role, DNA helicase that plays a role in DNA damage repair and genome stability. Exhibits a magnesium- and ATP-dependent DNA-helicase activity that unwinds single- and double-stranded DNA in a 3'-5' direction. Plays a role in restoring regressed replication forks. Required to restart stalled replication forks induced by abortive topoisomerase 1 and 2 lesions. May play a role in the repair of DNA that is damaged by ultraviolet light or other mutagens. The polypeptide is ATP-dependent DNA helicase Q1 (Recql) (Rattus norvegicus (Rat)).